Here is a 136-residue protein sequence, read N- to C-terminus: Ribonuclease YqgF (136 aa).

It belongs to the YqgF nuclease family. In terms of assembly, monomer; also forms low amounts of dimers. Mn(2+) is required as a cofactor.

It localises to the cytoplasm. Functionally, has robust sequence-specific RNase activity, acting as a 5'-3' exo/endonuclease on ssRNA substrates with minimally 3 consecutive adenine bases. Has no detectable nuclease activity on dsRNA, dsDNA or Holliday junction DNA. This is Ribonuclease YqgF from Deinococcus radiodurans (strain ATCC 13939 / DSM 20539 / JCM 16871 / CCUG 27074 / LMG 4051 / NBRC 15346 / NCIMB 9279 / VKM B-1422 / R1).